The primary structure comprises 538 residues: Bifunctional purine biosynthesis protein PurH (538 aa).

The region spanning 11–158 is the MGS-like domain; the sequence is PDLHRVRRAL…KNHAYTGVVT (148 aa).

It belongs to the PurH family.

The enzyme catalyses (6R)-10-formyltetrahydrofolate + 5-amino-1-(5-phospho-beta-D-ribosyl)imidazole-4-carboxamide = 5-formamido-1-(5-phospho-D-ribosyl)imidazole-4-carboxamide + (6S)-5,6,7,8-tetrahydrofolate. It carries out the reaction IMP + H2O = 5-formamido-1-(5-phospho-D-ribosyl)imidazole-4-carboxamide. Its pathway is purine metabolism; IMP biosynthesis via de novo pathway; 5-formamido-1-(5-phospho-D-ribosyl)imidazole-4-carboxamide from 5-amino-1-(5-phospho-D-ribosyl)imidazole-4-carboxamide (10-formyl THF route): step 1/1. It functions in the pathway purine metabolism; IMP biosynthesis via de novo pathway; IMP from 5-formamido-1-(5-phospho-D-ribosyl)imidazole-4-carboxamide: step 1/1. The protein is Bifunctional purine biosynthesis protein PurH of Bartonella bacilliformis (strain ATCC 35685 / KC583 / Herrer 020/F12,63).